Reading from the N-terminus, the 323-residue chain is Mitochondrial glutamate carrier 1 (323 aa).

Solcar repeat units lie at residues 6-93 (ISLP…FRHQ), 101-214 (LTLP…LNQL), and 223-312 (SPFY…GIAE). The next 6 membrane-spanning stretches (helical) occupy residues 12 to 32 (LINGGIAGLIGVTCVFPIDLA), 62 to 82 (YFGMYRGAAVNLTLVTPEKAI), 107 to 127 (MLAGCGAGTCQVIVTTPMEML), 189 to 209 (GLGATLLRDVPFSIVYFPLFA), 223 to 243 (SPFYVSFLAGCVAGSAAAVAV), and 292 to 312 (ALVIAPLFGIAQVVYFLGIAE).

The protein belongs to the mitochondrial carrier (TC 2.A.29) family.

Its subcellular location is the mitochondrion inner membrane. The enzyme catalyses L-glutamate(in) + H(+)(in) = L-glutamate(out) + H(+)(out). In terms of biological role, mitochondrial glutamate/H(+) symporter. Responsible for the transport of glutamate from the cytosol into the mitochondrial matrix with the concomitant import of a proton. Plays a role in the control of glucose-stimulated insulin secretion. This chain is Mitochondrial glutamate carrier 1 (Slc25a22), found in Mus musculus (Mouse).